The following is a 165-amino-acid chain: Transmembrane protein 128 (165 aa).

4 consecutive transmembrane segments (helical) span residues 49 to 69 (NIHSGFWILASIVVTYYVDFF), 81 to 101 (WFLCGSALLLVSLSIAFYCIV), 119 to 139 (LIPITTASFIAAGICFNIALW), and 144 to 164 (FFTPLLLFTQFMGVVMFITLL).

The protein resides in the membrane. The protein is Transmembrane protein 128 (TMEM128) of Homo sapiens (Human).